The following is a 198-amino-acid chain: Pyridoxal 5'-phosphate synthase subunit PdxT (198 aa).

49–51 serves as a coordination point for L-glutamine; that stretch reads GES. The Nucleophile role is filled by C81. Residues R113 and 141-142 contribute to the L-glutamine site; that span reads IR. Residues H177 and E179 each act as charge relay system in the active site.

This sequence belongs to the glutaminase PdxT/SNO family. As to quaternary structure, in the presence of PdxS, forms a dodecamer of heterodimers. Only shows activity in the heterodimer.

The enzyme catalyses aldehydo-D-ribose 5-phosphate + D-glyceraldehyde 3-phosphate + L-glutamine = pyridoxal 5'-phosphate + L-glutamate + phosphate + 3 H2O + H(+). The catalysed reaction is L-glutamine + H2O = L-glutamate + NH4(+). It participates in cofactor biosynthesis; pyridoxal 5'-phosphate biosynthesis. Its function is as follows. Catalyzes the hydrolysis of glutamine to glutamate and ammonia as part of the biosynthesis of pyridoxal 5'-phosphate. The resulting ammonia molecule is channeled to the active site of PdxS. The chain is Pyridoxal 5'-phosphate synthase subunit PdxT from Mycobacterium leprae (strain TN).